A 987-amino-acid polypeptide reads, in one-letter code: MAADLCWLSLLLASLALSGAVYEDQVGKFDWRQEYVGRIKFASLESGLGAKKLIAVTDKNIIAALNSRTGDLLWRHVDKDTSEGTVDALMMIGQDAITVSGGRLLRSWETNIGALNWEAALEPGSFQAVSFAGSQDTARYVAVLKNSALSLYFLSNGHLKWSESLPESDTVQYQLLYSPYKGSVHVVGLVPHSHLTILTFSLEDGSISHQVRVLTPWLRTLHGTCGVIGEGVLVCGDVPMASVHIVSLLSGEETTRYSVQSLDIELAEDPTQLDVITAPQNGIGGSLSQFFLQIAPRRFLLMHYHDGVLTPLRDFSQVSLVNFATTGEKTVVAVMQCKTEGNPKSGAESEYLTGQNCAQEPWYCPGHTYSINLYMADSGRRLLETTMSFTLDQICVRPDSFYLQTFLRKDDSVGYRALVQTEDNQLLFLQQPGKLIWLREESLADVVTMETVDLPLTGAQAELEGEFGKKADGLIGMVLKRLSSQLILLQSWSAHLWKMFCDARKPRSQIRNEINVDTLARDDFNLQKMMVMVTASGKLFGIESSSGSILWKFYLHGVHPGSSFKLLVQRTTAHFPHPPQCTLLVKDKVTEKSAMYVFNPIFGKLSQLAPPPLQRPILQSLLLPIMDNDYAKVLLLLDDQHKVIAFPATKYVLQQLQELHSTIFFYLVDVEKGKLSGLRLNKDLSTEEIWEVLLPADQQRITVVKGKRSNEHVHSQGRVMGDRSVLYKYLNPNLLVLVTESTDTHPERCFIGIYLIDGVTGRIIHSSVQRRARGPVQIIHSENWVVYQYWNSKARRNELTVLELYEGTEQYNSTNFSSLDRPLLPHVLQQSYIFPSAIRAMQATITERGITSRHILIGLPSGAILSLPKALLDPRRPEIPNEYTREENLIPYTPDIQIHAERFINYNQTISRMRGIYTAPSGLESTCLVVAYGLDLYQTRVYPSKQFDVLKDDYDYILISSVLIGLVFATMITKRLAQVKLLNRAWR.

The N-terminal stretch at 1-21 (MAADLCWLSLLLASLALSGAV) is a signal peptide. Over 22–956 (YEDQVGKFDW…FDVLKDDYDY (935 aa)) the chain is Lumenal. 2 cysteine pairs are disulfide-bonded: Cys-225–Cys-235 and Cys-337–Cys-364. N-linked (GlcNAc...) asparagine glycans are attached at residues Asn-812, Asn-815, and Asn-907. The helical transmembrane segment at 957–977 (ILISSVLIGLVFATMITKRLA) threads the bilayer. The Cytoplasmic segment spans residues 978 to 987 (QVKLLNRAWR).

It belongs to the EMC1 family. In terms of assembly, component of the ER membrane protein complex (EMC).

It localises to the endoplasmic reticulum membrane. Part of the endoplasmic reticulum membrane protein complex (EMC) that enables the energy-independent insertion into endoplasmic reticulum membranes of newly synthesized membrane proteins. Preferentially accommodates proteins with transmembrane domains that are weakly hydrophobic or contain destabilizing features such as charged and aromatic residues. Involved in the cotranslational insertion of multi-pass membrane proteins in which stop-transfer membrane-anchor sequences become ER membrane spanning helices. It is also required for the post-translational insertion of tail-anchored/TA proteins in endoplasmic reticulum membranes. By mediating the proper cotranslational insertion of N-terminal transmembrane domains in an N-exo topology, with translocated N-terminus in the lumen of the ER, controls the topology of multi-pass membrane proteins like the G protein-coupled receptors. By regulating the insertion of various proteins in membranes, it is indirectly involved in many cellular processes. The protein is ER membrane protein complex subunit 1 (emc1) of Xenopus laevis (African clawed frog).